Consider the following 212-residue polypeptide: Peptide methionine sulfoxide reductase MsrA (212 aa).

Residue cysteine 52 is part of the active site.

Belongs to the MsrA Met sulfoxide reductase family.

The enzyme catalyses L-methionyl-[protein] + [thioredoxin]-disulfide + H2O = L-methionyl-(S)-S-oxide-[protein] + [thioredoxin]-dithiol. It catalyses the reaction [thioredoxin]-disulfide + L-methionine + H2O = L-methionine (S)-S-oxide + [thioredoxin]-dithiol. Functionally, has an important function as a repair enzyme for proteins that have been inactivated by oxidation. Catalyzes the reversible oxidation-reduction of methionine sulfoxide in proteins to methionine. The polypeptide is Peptide methionine sulfoxide reductase MsrA (Salmonella schwarzengrund (strain CVM19633)).